The primary structure comprises 467 residues: Glutamine synthetase (467 aa).

In terms of domain architecture, GS beta-grasp spans histidine 11 to threonine 95. Residues proline 103–valine 467 form the GS catalytic domain. 2 residues coordinate Mg(2+): glutamate 128 and glutamate 130. Glutamate 206 lines the ATP pocket. The Mg(2+) site is built by glutamate 211 and glutamate 219. Residues asparagine 263–glycine 264 and glycine 264 contribute to the L-glutamate site. Histidine 268 is a binding site for Mg(2+). Residues histidine 270–serine 272 and serine 272 contribute to the ATP site. L-glutamate is bound by residues arginine 320, glutamate 326, and arginine 338. Positions 338, 343, and 351 each coordinate ATP. Residue glutamate 356 participates in Mg(2+) binding. Residue arginine 358 participates in L-glutamate binding. Tyrosine 396 is modified (O-AMP-tyrosine).

It belongs to the glutamine synthetase family. As to quaternary structure, oligomer of 12 subunits arranged in the form of two hexameric ring. Requires Mg(2+) as cofactor.

The protein localises to the cytoplasm. It carries out the reaction L-glutamate + NH4(+) + ATP = L-glutamine + ADP + phosphate + H(+). The activity of this enzyme could be controlled by adenylation under conditions of abundant glutamine. Functionally, catalyzes the ATP-dependent biosynthesis of glutamine from glutamate and ammonia. The protein is Glutamine synthetase of Azotobacter vinelandii.